Reading from the N-terminus, the 459-residue chain is Ribulose bisphosphate carboxylase large chain (459 aa).

Residues 1–2 (MS) constitute a propeptide that is removed on maturation. Proline 3 is subject to N-acetylproline. Lysine 14 is modified (N6,N6,N6-trimethyllysine). Residues asparagine 123 and threonine 173 each coordinate substrate. Lysine 175 (proton acceptor) is an active-site residue. Lysine 177 is a substrate binding site. 3 residues coordinate Mg(2+): lysine 201, aspartate 203, and glutamate 204. Position 201 is an N6-carboxylysine (lysine 201). Histidine 294 functions as the Proton acceptor in the catalytic mechanism. Residues arginine 295, histidine 327, and serine 379 each coordinate substrate.

Belongs to the RuBisCO large chain family. Type I subfamily. In terms of assembly, heterohexadecamer of 8 large chains and 8 small chains; disulfide-linked. The disulfide link is formed within the large subunit homodimers. Mg(2+) serves as cofactor. In terms of processing, the disulfide bond which can form in the large chain dimeric partners within the hexadecamer appears to be associated with oxidative stress and protein turnover.

It localises to the plastid. It is found in the chloroplast. It catalyses the reaction 2 (2R)-3-phosphoglycerate + 2 H(+) = D-ribulose 1,5-bisphosphate + CO2 + H2O. It carries out the reaction D-ribulose 1,5-bisphosphate + O2 = 2-phosphoglycolate + (2R)-3-phosphoglycerate + 2 H(+). RuBisCO catalyzes two reactions: the carboxylation of D-ribulose 1,5-bisphosphate, the primary event in carbon dioxide fixation, as well as the oxidative fragmentation of the pentose substrate in the photorespiration process. Both reactions occur simultaneously and in competition at the same active site. In Streptopus lanceolatus (Rose twisted stalk), this protein is Ribulose bisphosphate carboxylase large chain.